A 361-amino-acid chain; its full sequence is Ribosomal RNA large subunit methyltransferase M (361 aa).

S-adenosyl-L-methionine is bound by residues serine 193, 226 to 229 (CPGG), aspartate 245, aspartate 265, and aspartate 283. The active-site Proton acceptor is lysine 312.

It belongs to the class I-like SAM-binding methyltransferase superfamily. RNA methyltransferase RlmE family. RlmM subfamily. Monomer.

The protein localises to the cytoplasm. It carries out the reaction cytidine(2498) in 23S rRNA + S-adenosyl-L-methionine = 2'-O-methylcytidine(2498) in 23S rRNA + S-adenosyl-L-homocysteine + H(+). Its function is as follows. Catalyzes the 2'-O-methylation at nucleotide C2498 in 23S rRNA. This Histophilus somni (strain 129Pt) (Haemophilus somnus) protein is Ribosomal RNA large subunit methyltransferase M.